Consider the following 153-residue polypeptide: Cofilin (153 aa).

The ADF-H domain occupies 4–148 (SGATVSQDCI…EYDSILKTVS (145 aa)).

Belongs to the actin-binding proteins ADF family.

It localises to the cytoplasm. The protein localises to the cytoskeleton. The protein resides in the nucleus matrix. Its function is as follows. Controls reversibly actin polymerization and depolymerization in a pH-sensitive manner. It has the ability to bind G- and F-actin in a 1:1 ratio of cofilin to actin. Binding to F-actin is regulated by tropomyosin. It is the major component of intranuclear and cytoplasmic actin rods. Required for accumulation of actin at the cell division site via depolymerizing actin at the cell ends. In association with myosin II has a role in the assembly of the contractile ring via severing actin filaments. Involved in the maintenance of the contractile ring once formed. In association with profilin and capping protein, has a role in the mitotic reorganization of the actin cytoskeleton. The polypeptide is Cofilin (COF1) (Gibberella zeae (strain ATCC MYA-4620 / CBS 123657 / FGSC 9075 / NRRL 31084 / PH-1) (Wheat head blight fungus)).